A 256-amino-acid chain; its full sequence is Deoxyribose-phosphate aldolase (256 aa).

Residue aspartate 102 is the Proton donor/acceptor of the active site. The active-site Schiff-base intermediate with acetaldehyde is the lysine 165. Catalysis depends on lysine 197, which acts as the Proton donor/acceptor.

The protein belongs to the DeoC/FbaB aldolase family. DeoC type 2 subfamily.

It is found in the cytoplasm. It catalyses the reaction 2-deoxy-D-ribose 5-phosphate = D-glyceraldehyde 3-phosphate + acetaldehyde. It participates in carbohydrate degradation; 2-deoxy-D-ribose 1-phosphate degradation; D-glyceraldehyde 3-phosphate and acetaldehyde from 2-deoxy-alpha-D-ribose 1-phosphate: step 2/2. Catalyzes a reversible aldol reaction between acetaldehyde and D-glyceraldehyde 3-phosphate to generate 2-deoxy-D-ribose 5-phosphate. The protein is Deoxyribose-phosphate aldolase of Shewanella baltica (strain OS223).